The primary structure comprises 334 residues: Ribosomal lysine N-methyltransferase 5 (334 aa).

Residues tryptophan 88, 155–157, aspartate 177, tryptophan 227, and methionine 254 each bind S-adenosyl-L-methionine; that span reads GAG.

It belongs to the class I-like SAM-binding methyltransferase superfamily. RKM5 family.

S-adenosyl-L-methionine-dependent protein-lysine N-methyltransferase that methylates 60S ribosomal protein L1. This Lachancea thermotolerans (strain ATCC 56472 / CBS 6340 / NRRL Y-8284) (Yeast) protein is Ribosomal lysine N-methyltransferase 5 (RKM5).